Here is a 181-residue protein sequence, read N- to C-terminus: Large ribosomal subunit protein uL5 (181 aa).

It belongs to the universal ribosomal protein uL5 family. In terms of assembly, part of the 50S ribosomal subunit; part of the 5S rRNA/L5/L18/L25 subcomplex. Contacts the 5S rRNA and the P site tRNA. Forms a bridge to the 30S subunit in the 70S ribosome.

Its function is as follows. This is one of the proteins that bind and probably mediate the attachment of the 5S RNA into the large ribosomal subunit, where it forms part of the central protuberance. In the 70S ribosome it contacts protein S13 of the 30S subunit (bridge B1b), connecting the 2 subunits; this bridge is implicated in subunit movement. Contacts the P site tRNA; the 5S rRNA and some of its associated proteins might help stabilize positioning of ribosome-bound tRNAs. The chain is Large ribosomal subunit protein uL5 from Campylobacter hominis (strain ATCC BAA-381 / DSM 21671 / CCUG 45161 / LMG 19568 / NCTC 13146 / CH001A).